An 840-amino-acid chain; its full sequence is Phosphatidylinositol-3-phosphatase myotubularin-1 (840 aa).

Residues 1 to 28 (MTPPRPPSGRVRSLRDYSSESEKMDGTG) form a disordered region. Over residues 13-25 (SLRDYSSESEKMD) the composition is skewed to basic and acidic residues. In terms of domain architecture, GRAM spans 45–112 (GSFSNLSCLL…ATIEKFNKMV (68 aa)). The Myotubularin phosphatase domain maps to 199–650 (GKSSIRASMD…LAPTLWPQFH (452 aa)). Substrate contacts are provided by residues 332–335 (NGAM), 357–358 (NI), 443–449 (CSDGWDR), and Arg-489. The active-site Phosphocysteine intermediate is Cys-443. Residues 506 to 535 (QSSSAGSFPSSPVRQSSGSAASQSSSSSHG) are disordered. The span at 507-535 (SSSAGSFPSSPVRQSSGSAASQSSSSSHG) shows a compositional bias: low complexity. Positions 666 to 734 (VQCRAMTVKY…AALTRAVQSL (69 aa)) form a coiled coil. Residues 745-771 (VEDDPRSSLENNPRRRNRHGNNSDVSV) form a disordered region.

It belongs to the protein-tyrosine phosphatase family. Non-receptor class myotubularin subfamily. As to expression, mostly expressed in siliques and leaves (including hydathodes), and, to a lower extent, in flowers and roots.

The protein resides in the cytoplasm. It is found in the endosome membrane. It carries out the reaction a 1,2-diacyl-sn-glycero-3-phospho-(1D-myo-inositol-3-phosphate) + H2O = a 1,2-diacyl-sn-glycero-3-phospho-(1D-myo-inositol) + phosphate. It catalyses the reaction a 1,2-diacyl-sn-glycero-3-phospho-(1D-myo-inositol-3,5-bisphosphate) + H2O = a 1,2-diacyl-sn-glycero-3-phospho-(1D-myo-inositol-5-phosphate) + phosphate. Functionally, phosphatase with phosphoinositide 3'-phosphatase activity that can use phosphatidylinositol-3-phosphate (PtdIns3P) and phosphatidylinositol-3,5-diphosphate (PtdIns3,5P(2)) as substrates and produces phosphatidylinositol-5-phosphate (PtdIns5P); participates in pathway(s) that transfer gene regulatory signals to the nucleus. Required for recovery after water deprivation, via the accumulation of PtdIns5P upon dehydration; high PtdIns5P levels mediate ATX1 cytoplasmic localization, thus down-regulating the expression of ATX1-dependent genes. Confers sensitivity to soil-water-deficit stress. The polypeptide is Phosphatidylinositol-3-phosphatase myotubularin-1 (MTM1) (Arabidopsis thaliana (Mouse-ear cress)).